Consider the following 100-residue polypeptide: Urease subunit gamma (100 aa).

This sequence belongs to the urease gamma subunit family. In terms of assembly, heterotrimer of UreA (gamma), UreB (beta) and UreC (alpha) subunits. Three heterotrimers associate to form the active enzyme.

Its subcellular location is the cytoplasm. The catalysed reaction is urea + 2 H2O + H(+) = hydrogencarbonate + 2 NH4(+). Its pathway is nitrogen metabolism; urea degradation; CO(2) and NH(3) from urea (urease route): step 1/1. This chain is Urease subunit gamma, found in Ruegeria pomeroyi (strain ATCC 700808 / DSM 15171 / DSS-3) (Silicibacter pomeroyi).